A 350-amino-acid polypeptide reads, in one-letter code: MPVLHNRISNDELKARMLAESEPRTTISFYKYFTIVSPQQTRDALYQMFTALGIFGRVYLAHEGINAQISVPQSKVETFRQQLYAFDPALDGLRLNIALEDDGKSFWVLRMKVRDRIVADGIDDPSFDASNVGAYLKAAEVNAMLDDPDAIFIDMRNHYEYEVGHFENALEIPADTFREQLPKAVEMLREHADKKIVMYCTGGIRCEKASAWMKHNGFNKVWHIEGGIIEYARRAREQGLPVRFIGKNFVFDERMGERISDEVIAHCHQCGALCDSHTNCKNAGCHLLFIQCPLCASKFNGCCSEQCCEELALPEDEQRRRRAGREKGNKIFNKSRGRLNSKLGIPDPTE.

The region spanning 146 to 240 (DDPDAIFIDM…YARRAREQGL (95 aa)) is the Rhodanese domain. Cys-200 (cysteine persulfide intermediate) is an active-site residue. Positions 318-350 (QRRRRAGREKGNKIFNKSRGRLNSKLGIPDPTE) are disordered.

Belongs to the TrhO family.

It carries out the reaction uridine(34) in tRNA + AH2 + O2 = 5-hydroxyuridine(34) in tRNA + A + H2O. Functionally, catalyzes oxygen-dependent 5-hydroxyuridine (ho5U) modification at position 34 in tRNAs. The protein is tRNA uridine(34) hydroxylase of Salmonella arizonae (strain ATCC BAA-731 / CDC346-86 / RSK2980).